Consider the following 345-residue polypeptide: Protein D345L (345 aa).

This sequence belongs to the asfivirus D345L family. In terms of assembly, interacts with IKKA/CHUK and IKBKB.

It localises to the host cytoplasm. Its function is as follows. Plays a role in the negative regulation of host NF-kappa-B signaling pathway. Mechanistically, recruits IKKA/CHUK and IKBKB to suppress their kinase activity towards NFKBIA. This Ornithodoros (relapsing fever ticks) protein is Protein D345L.